Consider the following 425-residue polypeptide: UPF0597 protein VSAL_I0741 (425 aa).

Belongs to the UPF0597 family.

The sequence is that of UPF0597 protein VSAL_I0741 from Aliivibrio salmonicida (strain LFI1238) (Vibrio salmonicida (strain LFI1238)).